A 423-amino-acid polypeptide reads, in one-letter code: Ferrochelatase, mitochondrial (423 aa).

The transit peptide at 1–54 (MRSLGANMAAALRAAGVLLRDPLVSSSWRVYQPWRWKSVAAAAAATTETAQHAQ) directs the protein to the mitochondrion. The residue at position 57 (Lys57) is an N6-acetyllysine. Protoporphyrin IX-binding residues include Arg115, Tyr123, and Ser130. At Lys138 the chain carries N6-succinyllysine. A [2Fe-2S] cluster-binding site is contributed by Cys196. Catalysis depends on residues His230 and Asp383. Cys403, Cys406, and Cys411 together coordinate [2Fe-2S] cluster. Position 415 is an N6-acetyllysine; alternate (Lys415). N6-succinyllysine; alternate is present on Lys415.

Belongs to the ferrochelatase family. As to quaternary structure, homodimer. Homotetramer. Interaction with PGRMC1; the interaction results in decreased FECH activity. Interacts with ABCB10 and SLC25A37; this interaction forms an oligomeric complex. Forms a complex with ABCB7 and ABCB10, where a dimeric FECH bridges ABCB7 and ABCB10 homodimers; this complex may be required for cellular iron homeostasis, mitochondrial function and heme biosynthesis. Interacts with ABCB7 and ABCB10. It depends on [2Fe-2S] cluster as a cofactor.

The protein resides in the mitochondrion inner membrane. The enzyme catalyses heme b + 2 H(+) = protoporphyrin IX + Fe(2+). The protein operates within porphyrin-containing compound metabolism; protoheme biosynthesis; protoheme from protoporphyrin-IX: step 1/1. Its function is as follows. Catalyzes the ferrous insertion into protoporphyrin IX and participates in the terminal step in the heme biosynthetic pathway. This chain is Ferrochelatase, mitochondrial, found in Pan troglodytes (Chimpanzee).